The following is a 947-amino-acid chain: Bifunctional glutamine synthetase adenylyltransferase/adenylyl-removing enzyme (947 aa).

The interval 1–440 is adenylyl removase; it reads MTPLSSPLSQ…VFNELIGDDE (440 aa). The tract at residues 450–947 is adenylyl transferase; that stretch reads SEPWREVWQD…ASWRKWLVAV (498 aa).

It belongs to the GlnE family. Requires Mg(2+) as cofactor.

It catalyses the reaction [glutamine synthetase]-O(4)-(5'-adenylyl)-L-tyrosine + phosphate = [glutamine synthetase]-L-tyrosine + ADP. It carries out the reaction [glutamine synthetase]-L-tyrosine + ATP = [glutamine synthetase]-O(4)-(5'-adenylyl)-L-tyrosine + diphosphate. In terms of biological role, involved in the regulation of glutamine synthetase GlnA, a key enzyme in the process to assimilate ammonia. When cellular nitrogen levels are high, the C-terminal adenylyl transferase (AT) inactivates GlnA by covalent transfer of an adenylyl group from ATP to specific tyrosine residue of GlnA, thus reducing its activity. Conversely, when nitrogen levels are low, the N-terminal adenylyl removase (AR) activates GlnA by removing the adenylyl group by phosphorolysis, increasing its activity. The regulatory region of GlnE binds the signal transduction protein PII (GlnB) which indicates the nitrogen status of the cell. This chain is Bifunctional glutamine synthetase adenylyltransferase/adenylyl-removing enzyme, found in Salmonella gallinarum (strain 287/91 / NCTC 13346).